We begin with the raw amino-acid sequence, 284 residues long: Tegument protein VP22 (284 aa).

2 disordered regions span residues 1–126 and 239–284; these read MSYY…WSID and LYAS…SRRR. Basic and acidic residues predominate over residues 74-83; the sequence is SRDDDDRRQP. Residues 94–108 show a composition bias toward basic residues; that stretch reads ERRKSQTTVTTRRKT. Over residues 115 to 126 the composition is skewed to polar residues; the sequence is KSSNSNGPWSID.

The protein belongs to the alphaherpesvirinae VP22 tegument protein family. In terms of assembly, interacts with gE (via C-terminus); this interaction is necessary for the recruitment of VP22 to the Golgi and its packaging into virions. Interacts with gM (via C-terminus). Interacts with VP16; this interaction allows the formation of a tripartite complex composed of VP16, VP22 and UL41/VHS. Interacts with the capsid-binding protein UL16. Interacts with host CGAS. In terms of processing, highly phosphorylated in the host cell. Packaging is selective for underphosphorylated forms.

The protein localises to the virion tegument. It localises to the host cytoplasm. The protein resides in the host nucleus. It is found in the host Golgi apparatus. Tegument protein that plays different roles during the time course of infection. Participates in both the accumulation of viral mRNAs and viral protein translation at late time of infection. Modulates the RNase activity of the virion host shutoff protein UL41 probably to ensure necessary levels of key cellular mRNAs and proteins. Plays a role in microtubule reorganization that occurs after viral infection by stabilizing microtubule network. Plays a role in the inhibition of host innate immune system by targeting the CGAS enzymatic activity which is the principal cytosolic DNA sensor that detects invading viral DNA. Acts by mediating disruption of liquid-like droplets in which CGAS is activated, thereby preventing CGAS activity. This is Tegument protein VP22 (UL49) from Amazona oratrix (yellow-headed parrot).